Consider the following 21-residue polypeptide: GLLASLGKVFGGYLAEKLKPK.

Expressed by the skin dorsal glands.

It localises to the secreted. In terms of biological role, has no antimicrobial activity. Strongly inhibits the formation of NO by neuronal nitric oxide synthase at micromolar concentrations. The polypeptide is Dahlein-5.6 (Ranoidea dahlii (Dahl's aquatic frog)).